The sequence spans 522 residues: Zinc finger protein C25B8.19c (522 aa).

5 disordered regions span residues 1–25 (MSSD…LPTT), 61–96 (DPQA…SNSN), 235–265 (QRQS…QEVT), 311–386 (QPSS…HTLS), and 413–462 (NSAQ…STSS). A compositionally biased stretch (low complexity) spans 84–96 (AGNTNTPTTSNSN). 2 stretches are compositionally biased toward polar residues: residues 311–321 (QPSSRDLQNHP) and 335–344 (ASNTLNHANG). Positions 345–362 (NQAENASESSTSQSNDSQ) are enriched in low complexity. Residues 413–427 (NSAQAHPMGQQSDSN) show a composition bias toward polar residues. Residues 428 to 438 (YSDHHNNDKRA) are compositionally biased toward basic and acidic residues. The span at 453 to 462 (SHTGSSSTSS) shows a compositional bias: low complexity. 2 C2H2-type zinc fingers span residues 468-495 (YRCT…GERP) and 496-522 (FVCD…IHGL).

It is found in the nucleus. In Schizosaccharomyces pombe (strain 972 / ATCC 24843) (Fission yeast), this protein is Zinc finger protein C25B8.19c.